The sequence spans 58 residues: Keratin-associated protein 19-9b (58 aa).

Residues Gly-6–Tyr-52 are 12 X 2 AA repeats of G-[YCGS].

It belongs to the KRTAP type 19 family. As to quaternary structure, interacts with hair keratins.

In terms of biological role, in the hair cortex, hair keratin intermediate filaments are embedded in an interfilamentous matrix, consisting of hair keratin-associated proteins (KRTAP), which are essential for the formation of a rigid and resistant hair shaft through their extensive disulfide bond cross-linking with abundant cysteine residues of hair keratins. The matrix proteins include the high-sulfur and high-glycine-tyrosine keratins. The chain is Keratin-associated protein 19-9b (Krtap19-9b) from Mus musculus (Mouse).